A 205-amino-acid polypeptide reads, in one-letter code: LexA repressor (205 aa).

The H-T-H motif DNA-binding region spans 28–48 (RAEIAKRLGFKSANAAEEHLK). Active-site for autocatalytic cleavage activity residues include Ser-122 and Lys-159.

Belongs to the peptidase S24 family. In terms of assembly, homodimer.

The enzyme catalyses Hydrolysis of Ala-|-Gly bond in repressor LexA.. Represses a number of genes involved in the response to DNA damage (SOS response), including recA and lexA. In the presence of single-stranded DNA, RecA interacts with LexA causing an autocatalytic cleavage which disrupts the DNA-binding part of LexA, leading to derepression of the SOS regulon and eventually DNA repair. The protein is LexA repressor of Shewanella woodyi (strain ATCC 51908 / MS32).